Reading from the N-terminus, the 165-residue chain is Nucleotide-binding protein LBF_1338 (165 aa).

It belongs to the YajQ family.

Nucleotide-binding protein. The polypeptide is Nucleotide-binding protein LBF_1338 (Leptospira biflexa serovar Patoc (strain Patoc 1 / Ames)).